A 235-amino-acid polypeptide reads, in one-letter code: Phosphoribosylaminoimidazole-succinocarboxamide synthase (235 aa).

This sequence belongs to the SAICAR synthetase family.

The enzyme catalyses 5-amino-1-(5-phospho-D-ribosyl)imidazole-4-carboxylate + L-aspartate + ATP = (2S)-2-[5-amino-1-(5-phospho-beta-D-ribosyl)imidazole-4-carboxamido]succinate + ADP + phosphate + 2 H(+). It functions in the pathway purine metabolism; IMP biosynthesis via de novo pathway; 5-amino-1-(5-phospho-D-ribosyl)imidazole-4-carboxamide from 5-amino-1-(5-phospho-D-ribosyl)imidazole-4-carboxylate: step 1/2. The protein is Phosphoribosylaminoimidazole-succinocarboxamide synthase of Prosthecochloris aestuarii (strain DSM 271 / SK 413).